The chain runs to 135 residues: MLRTLLKSKIHRATVTDCELHYEGSCAIDEDLLDAANLLENEQIHIWNINNGERFVTYAIRGERGTGIISVNGSAARRAAVGDLIIIAAFAQVPEAQLDGFKPQLVFVDANNRVQHQRSHIPVQAAAHPQEGRPS.

Ser25 (schiff-base intermediate with substrate; via pyruvic acid) is an active-site residue. A Pyruvic acid (Ser) modification is found at Ser25. Position 57 (Thr57) interacts with substrate. Residue Tyr58 is the Proton donor of the active site. 73 to 75 (GSA) serves as a coordination point for substrate.

This sequence belongs to the PanD family. In terms of assembly, heterooctamer of four alpha and four beta subunits. It depends on pyruvate as a cofactor. In terms of processing, is synthesized initially as an inactive proenzyme, which is activated by self-cleavage at a specific serine bond to produce a beta-subunit with a hydroxyl group at its C-terminus and an alpha-subunit with a pyruvoyl group at its N-terminus.

Its subcellular location is the cytoplasm. It carries out the reaction L-aspartate + H(+) = beta-alanine + CO2. It functions in the pathway cofactor biosynthesis; (R)-pantothenate biosynthesis; beta-alanine from L-aspartate: step 1/1. In terms of biological role, catalyzes the pyruvoyl-dependent decarboxylation of aspartate to produce beta-alanine. This is Aspartate 1-decarboxylase from Albidiferax ferrireducens (strain ATCC BAA-621 / DSM 15236 / T118) (Rhodoferax ferrireducens).